The following is a 224-amino-acid chain: Thiamine-triphosphatase (224 aa).

At Ala-2 the chain carries N-acetylalanine. One can recognise a CYTH domain in the interval 5 to 201; sequence LIEVERKFAP…AKLMVYLQRF (197 aa). Residues Glu-7 and Glu-9 each contribute to the Mg(2+) site. 5 residues coordinate substrate: Lys-11, Arg-55, Arg-57, Lys-65, and Arg-125. 3 residues coordinate Mg(2+): Asp-145, Glu-157, and Glu-159. Glu-157 provides a ligand contact to substrate. Lys-193 is a binding site for substrate.

The protein belongs to the ThTPase family. Monomer. Mg(2+) is required as a cofactor.

It is found in the cytoplasm. The enzyme catalyses thiamine triphosphate + H2O = thiamine diphosphate + phosphate + H(+). In terms of biological role, hydrolase highly specific for thiamine triphosphate (ThTP). This Mus musculus (Mouse) protein is Thiamine-triphosphatase (Thtpa).